The sequence spans 103 residues: Iron-sulfur cluster assembly protein CyaY (103 aa).

This sequence belongs to the frataxin family.

In terms of biological role, involved in iron-sulfur (Fe-S) cluster assembly. May act as a regulator of Fe-S biogenesis. In Rickettsia rickettsii (strain Iowa), this protein is Iron-sulfur cluster assembly protein CyaY.